A 777-amino-acid polypeptide reads, in one-letter code: Phosphoribosylformylglycinamidine synthase subunit PurL (777 aa).

The active site involves H50. Residues Y53 and K92 each contribute to the ATP site. Mg(2+) is bound at residue E94. Substrate contacts are provided by residues 95–98 and R117; that span reads SHNH. H96 acts as the Proton acceptor in catalysis. D118 contributes to the Mg(2+) binding site. Q241 provides a ligand contact to substrate. D269 is a binding site for Mg(2+). Position 313–315 (313–315) interacts with substrate; it reads ESQ. Positions 520 and 557 each coordinate ATP. Position 558 (N558) interacts with Mg(2+). Residue S560 participates in substrate binding.

The protein belongs to the FGAMS family. As to quaternary structure, monomer. Part of the FGAM synthase complex composed of 1 PurL, 1 PurQ and 2 PurS subunits.

It localises to the cytoplasm. The enzyme catalyses N(2)-formyl-N(1)-(5-phospho-beta-D-ribosyl)glycinamide + L-glutamine + ATP + H2O = 2-formamido-N(1)-(5-O-phospho-beta-D-ribosyl)acetamidine + L-glutamate + ADP + phosphate + H(+). Its pathway is purine metabolism; IMP biosynthesis via de novo pathway; 5-amino-1-(5-phospho-D-ribosyl)imidazole from N(2)-formyl-N(1)-(5-phospho-D-ribosyl)glycinamide: step 1/2. Its function is as follows. Part of the phosphoribosylformylglycinamidine synthase complex involved in the purines biosynthetic pathway. Catalyzes the ATP-dependent conversion of formylglycinamide ribonucleotide (FGAR) and glutamine to yield formylglycinamidine ribonucleotide (FGAM) and glutamate. The FGAM synthase complex is composed of three subunits. PurQ produces an ammonia molecule by converting glutamine to glutamate. PurL transfers the ammonia molecule to FGAR to form FGAM in an ATP-dependent manner. PurS interacts with PurQ and PurL and is thought to assist in the transfer of the ammonia molecule from PurQ to PurL. This Trichormus variabilis (strain ATCC 29413 / PCC 7937) (Anabaena variabilis) protein is Phosphoribosylformylglycinamidine synthase subunit PurL.